The primary structure comprises 708 residues: MKLFVPALLSLGALGLCLAAPRKNVRWCTISQPEWLKCHRWQWRMKKLGAPSITCVRRAFVLECIRAITEKKADAVTLDGGMVFEAGLDPYKLRPVAAEIYGTKESPQTHYYAVAVVKKGSNFQLDQLQGRNSCHTGLGRSAGWNIPMGILRPYLSWTESLEPFQGAVAKFFSASCVPCVDRQAYPNLCQLCKGEGENQCACSPREPYFGYSGAFKCLQDGAGDVAFVKETTVFENLPEKADRDQYELLCLNNTRAPVDAFKECHLAQVPSHAVVARSVDGKEDLIWKLLSKAQEKFGKNKSGSFQLFGSPPGQRDLLFKDCALGFLRIPSKVDSALYLGSRYLTALKNLRETAEEVQARRARVVWCAVGPEEQKKCQQWSQQSGQIVTCATASTTDDCIALVLKGEADALSLDGGYIYTAGKCGLVPVLAENRKSSKHSSLDCVLRPTEGYLAVAVVKKANEGLTWNSLKGKKSCHTAVDRTAGWNIPMGLIANQTGSCAFDEFFSQSCAPGADPKSRLCALCAGDDQGLDKCVPNSKEKYYGYTGAFRCLAEDVGDVAFVKNDTVWENTNGESTADWAKNLNREDFRLLCLDGTRKPVTEAQSCHLAVAPNHAVVSLSERAAHVEQVLLHQQALFGENGKNCPDKFCLFKSETKNLLFNDNTECLAKLGGRPTYEEYLGTEYVTAIANLKKCSTSPLLEACAFLTR.

The N-terminal stretch at 1–19 (MKLFVPALLSLGALGLCLA) is a signal peptide. Transferrin-like domains lie at 25 to 352 (VRWC…NLRE) and 364 to 693 (VVWC…NLKK). 2 disulfides stabilise this stretch: Cys28–Cys64 and Cys38–Cys55. A Fe cation-binding site is contributed by Asp79. Lys92 is an active-site residue. Tyr111 lines the Fe cation pocket. 5 cysteine pairs are disulfide-bonded: Cys134-Cys217, Cys176-Cys192, Cys179-Cys202, Cys189-Cys200, and Cys250-Cys264. Residues Thr136, Arg140, Ala142, and Gly143 each coordinate hydrogencarbonate. Residue Tyr211 participates in Fe cation binding. N-linked (GlcNAc...) (high mannose) asparagine glycosylation is present at Asn252. His272 serves as a coordination point for Fe cation. Ser278 (nucleophile) is an active-site residue. Asn300 is a glycosylation site (N-linked (GlcNAc...) (hybrid) asparagine). 2 cysteine pairs are disulfide-bonded: Cys367–Cys399 and Cys377–Cys390. 2 residues coordinate Fe cation: Asp414 and Tyr452. Intrachain disulfides connect Cys424–Cys703, Cys444–Cys666, Cys476–Cys551, Cys500–Cys694, Cys510–Cys524, Cys521–Cys534, Cys592–Cys606, and Cys644–Cys649. Hydrogencarbonate contacts are provided by Thr478, Arg482, Ala484, and Gly485. A glycan (N-linked (GlcNAc...) (complex) asparagine; alternate) is linked at Asn495. N-linked (GlcNAc...) (high mannose) asparagine; alternate glycosylation is present at Asn495. Residue Asn495 is glycosylated (N-linked (GlcNAc...) (hybrid) asparagine; alternate). Fe cation is bound at residue Tyr545. Asn564 is a glycosylation site (N-linked (GlcNAc...) (high mannose) asparagine). His614 serves as a coordination point for Fe cation.

The protein belongs to the transferrin family. Monomer. Found in a complex with LTF, CLU, EPPIN and SEMG1. Found in a complex with MPO and LTF; interacts directly with CP, allows Fe(3+) incorporation into LTF and activation of CP ferroxidase activity. Poly-N-acetyllactosaminic carbohydrate moiety seems to be needed for TLR4 activation.

Its subcellular location is the secreted. The protein resides in the cytoplasmic granule. Functionally, transferrins are iron binding transport proteins which can bind two Fe(3+) ions in association with the binding of an anion, usually bicarbonate. Major iron-binding and multifunctional protein found in exocrine fluids such as breast milk and mucosal secretions. Has antimicrobial activity, which depends on the extracellular cation concentration. Antimicrobial properties include bacteriostasis, which is related to its ability to sequester free iron and thus inhibit microbial growth, as well as direct bactericidal properties leading to the release of lipopolysaccharides from the bacterial outer membrane. Can also prevent bacterial biofilm development in P.aeruginosa infection. Has weak antifungal activity against C.albicans. Has anabolic, differentiating and anti-apoptotic effects on osteoblasts and can also inhibit osteoclastogenesis, possibly playing a role in the regulation of bone growth. Promotes binding of species C adenoviruses to epithelial cells, promoting adenovirus infection. Can inhibit papillomavirus infections. Stimulates the TLR4 signaling pathway leading to NF-kappa-B activation and subsequent pro-inflammatory cytokine production while also interfering with the lipopolysaccharide (LPS)-stimulated TLR4 signaling. Inhibits neutrophil granulocyte migration to sites of apoptosis, when secreted by apoptotic cells. Stimulates VEGFA-mediated endothelial cell migration and proliferation. Binds heparin, chondroitin sulfate and possibly other glycosaminoglycans (GAGs). Also binds specifically to pneumococcal surface protein A (PspA), the lipid A portion of bacterial lipopolysaccharide (LPS), lysozyme and DNA. In terms of biological role, lactoferricin binds to the bacterial surface and is crucial for the bactericidal functions. Has some antiviral activity against papillomavirus infection. N-terminal region shows strong antifungal activity against C.albicans. Contains two BBXB heparin-binding consensus sequences that appear to form the predominate functional GAG-binding site. Its function is as follows. The lactotransferrin transferrin-like domain 1 functions as a serine protease of the peptidase S60 family that cuts arginine rich regions. This function contributes to the antimicrobial activity. Shows a preferential cleavage at -Arg-Ser-Arg-Arg-|- and -Arg-Arg-Ser-Arg-|-, and of Z-Phe-Arg-|-aminomethylcoumarin sites. The protein is Lactotransferrin (LTF) of Bubalus bubalis (Domestic water buffalo).